The chain runs to 243 residues: MIIIPARLKSSRFENKVLEDIFGLPMVVRCAKNANLVDECVVACDDESIMQTCQKFHIKAVLTSKHHNSGTERCLEAVQILGLKNDERVLNLQGDEPFLEKEVILALLEATKNAPFMATCAKVIDEEQAKSPNLVKVVLDSQNNALYFSRSLIPFLRDFDAKRQTPLLGHIGIYGFHNKEILEELCALKPCVLEEIEKLEQLRALYYQKKILVKIVQSQSVGIDTQEDLQNALKIFSPDLLER.

Belongs to the KdsB family.

It is found in the cytoplasm. It carries out the reaction 3-deoxy-alpha-D-manno-oct-2-ulosonate + CTP = CMP-3-deoxy-beta-D-manno-octulosonate + diphosphate. It participates in nucleotide-sugar biosynthesis; CMP-3-deoxy-D-manno-octulosonate biosynthesis; CMP-3-deoxy-D-manno-octulosonate from 3-deoxy-D-manno-octulosonate and CTP: step 1/1. It functions in the pathway bacterial outer membrane biogenesis; lipopolysaccharide biosynthesis. Its function is as follows. Activates KDO (a required 8-carbon sugar) for incorporation into bacterial lipopolysaccharide in Gram-negative bacteria. This Helicobacter pylori (strain G27) protein is 3-deoxy-manno-octulosonate cytidylyltransferase.